We begin with the raw amino-acid sequence, 920 residues long: WD repeat-containing protein 47 (920 aa).

Positions 10–42 (KEVEIIKLILDFLNSKKLHISMLALEKESGVIN) constitute a LisH domain. A CTLH domain is found at 45–102 (FSDDMLFLRQLILDGQWDEVLQFIQPLECMEKFDKKRFRYIILKQKFLEALCVNNAMS). Position 285 is a phosphothreonine (Thr-285). Phosphoserine is present on residues Ser-289, Ser-292, Ser-297, and Ser-312. Residues 371-380 (YEESPERSDT) are compositionally biased toward basic and acidic residues. A disordered region spans residues 371–422 (YEESPERSDTPVEAQQPVSSEAMCQGSGLEKEPANGAQNPVPAKQEKNELRD). A Phosphoserine modification is found at Ser-423. The disordered stretch occupies residues 501–594 (LNQQCSGSKN…RSKGEEDDKS (94 aa)). Positions 506 to 523 (SGSKNNGSNNSSVTSFST) are enriched in low complexity. A compositionally biased stretch (polar residues) spans 538–552 (NIHTSTPRNPGSTNH). Thr-543 carries the phosphothreonine modification. 7 WD repeats span residues 605 to 644 (EDTQAVRAVAFHPSGSLYAVGSNSKTLRVCAYPEKMDASA), 660 to 699 (HHKGSIYCVAWSPCGQLLATGSNDKYVKVLPFNAETCNAT), 707 to 749 (MHDG…GQGL), 754 to 792 (GHTGHILALYTWSGWMIASGSQDKTVRFWDLRVPSCVRV), 799 to 838 (GTGSAVASVAVDPSGRLLATGQEDSSCMLYDIRGGRMVQS), 841 to 880 (PHSSDVRSVRFSPGAHYLLTGSYDMKIKVTDLQGDLTKQL), and 887 to 919 (EHKDKVIQCRWHTQDLSFLSSSADRTVTLWTYS).

As to quaternary structure, interacts with MAP1S (via WD repeats). As to expression, enriched in the nervous system (at protein level).

The protein resides in the cytoplasm. It is found in the cytoskeleton. The sequence is that of WD repeat-containing protein 47 (Wdr47) from Mus musculus (Mouse).